A 411-amino-acid chain; its full sequence is Glucose-1-phosphate adenylyltransferase (411 aa).

Alpha-D-glucose 1-phosphate is bound by residues Gly-164, 179 to 180 (EK), and Ser-197.

It belongs to the bacterial/plant glucose-1-phosphate adenylyltransferase family. In terms of assembly, homotetramer.

It catalyses the reaction alpha-D-glucose 1-phosphate + ATP + H(+) = ADP-alpha-D-glucose + diphosphate. The protein operates within glycan biosynthesis; glycogen biosynthesis. In terms of biological role, involved in the biosynthesis of ADP-glucose, a building block required for the elongation reactions to produce glycogen. Catalyzes the reaction between ATP and alpha-D-glucose 1-phosphate (G1P) to produce pyrophosphate and ADP-Glc. The chain is Glucose-1-phosphate adenylyltransferase from Corynebacterium kroppenstedtii (strain DSM 44385 / JCM 11950 / CIP 105744 / CCUG 35717).